Consider the following 351-residue polypeptide: Beta-hexosaminidase (351 aa).

Residues Asp-62, Arg-70, Arg-133, and 163-164 (KH) each bind substrate. Catalysis depends on His-176, which acts as the Proton donor/acceptor. The Nucleophile role is filled by Asp-248.

The protein belongs to the glycosyl hydrolase 3 family. NagZ subfamily. Monomer.

Its subcellular location is the cytoplasm. It catalyses the reaction Hydrolysis of terminal non-reducing N-acetyl-D-hexosamine residues in N-acetyl-beta-D-hexosaminides.. It participates in cell wall biogenesis; peptidoglycan recycling. Functionally, plays a role in peptidoglycan recycling by cleaving the terminal beta-1,4-linked N-acetylglucosamine (GlcNAc) from peptide-linked peptidoglycan fragments, giving rise to free GlcNAc, anhydro-N-acetylmuramic acid and anhydro-N-acetylmuramic acid-linked peptides. The chain is Beta-hexosaminidase from Haemophilus influenzae (strain ATCC 51907 / DSM 11121 / KW20 / Rd).